Consider the following 341-residue polypeptide: Anthranilate phosphoribosyltransferase (341 aa).

Residues Gly-84, 87 to 88 (GD), Thr-92, 94 to 97 (NVTT), 112 to 120 (KCGNRSVSS), and Ser-124 each bind 5-phospho-alpha-D-ribose 1-diphosphate. Anthranilate is bound at residue Gly-84. Residue Thr-96 coordinates Mg(2+). Asn-115 contributes to the anthranilate binding site. Anthranilate is bound at residue Arg-170. Mg(2+) contacts are provided by Asp-228 and Glu-229.

It belongs to the anthranilate phosphoribosyltransferase family. In terms of assembly, homodimer. It depends on Mg(2+) as a cofactor.

It catalyses the reaction N-(5-phospho-beta-D-ribosyl)anthranilate + diphosphate = 5-phospho-alpha-D-ribose 1-diphosphate + anthranilate. The protein operates within amino-acid biosynthesis; L-tryptophan biosynthesis; L-tryptophan from chorismate: step 2/5. Catalyzes the transfer of the phosphoribosyl group of 5-phosphorylribose-1-pyrophosphate (PRPP) to anthranilate to yield N-(5'-phosphoribosyl)-anthranilate (PRA). This chain is Anthranilate phosphoribosyltransferase, found in Corynebacterium diphtheriae (strain ATCC 700971 / NCTC 13129 / Biotype gravis).